Here is a 595-residue protein sequence, read N- to C-terminus: uncharacterized protein (595 aa).

A disordered region spans residues 1-21 (MSSQLKSTWAPVPSTKPSQPC). WD repeat units follow at residues 56-95 (EHTAPTTVARFSPSGYYVASGDNQGNVRIWDCAGEDKILK), 100-143 (AISG…GEIF), 144-184 (GHSS…FNRS), 187-226 (VHSKFVYDVRYSPNDERFASAGADGKVYVFDGKTGDQVYE), 229-268 (AHKGSIFSISWSPDSSQFVTSSAGYSCKIWDANTGSLIRE), 313-352 (GHQRSITAATLSPDATHFYTASYDGTVLSWDIGKQKAFPL), 356-393 (SHTNQVMQMIMADDHVITIGMDDTLRVIDIKQGCFAKD), 433-472 (KTIYQPSAVASHPLKSEFCVGGEDCCVYIHTLEKGELCEV), 477-516 (DSTAPITCLAYSPDGKYLACGDASGKVVLYDANSREVITS), 520-559 (FHTGRILGMSWNAKSTHLATASLDTNIHIYSVERPMKYIA), and 564-594 (HSLGATQVEWVSENELLSTGSDAAIKVWSVT).

It belongs to the WD repeat AIP1 family.

This is an uncharacterized protein from Schizosaccharomyces pombe (strain 972 / ATCC 24843) (Fission yeast).